Consider the following 488-residue polypeptide: uncharacterized protein (488 aa).

The next 12 helical transmembrane spans lie at 2 to 22 (FGLPIPIIGLLIAVFVLVFLV), 27 to 47 (VHAFIAMLIAASIAGLVGGMS), 59 to 79 (FGGTLGSIGIVIGLGVMMGSV), 106 to 126 (LAITGYVVSIPIFVDSAFVIL), 176 to 196 (IGAMLLTGMCMAFLPVVGIVL), 241 to 261 (LLPIVLPIVLIFIKAVVHLFV), 275 to 295 (IVSFLGHPVIVLALSVLISVY), 314 to 334 (VKTAGIILLVTGAGGALGAVL), 347 to 367 (IANLPISPILIPFIVSTLVRF), 368 to 388 (IQGSGTVAMITAASISSPILA), 438 to 458 (VPTTIAWGIGGISVILANLIF), and 461 to 481 (DGSVFDLLFPVVVLASILFYI).

This sequence belongs to the GntP permease family.

Its subcellular location is the cell inner membrane. This is an uncharacterized protein from Haemophilus influenzae (strain ATCC 51907 / DSM 11121 / KW20 / Rd).